A 243-amino-acid chain; its full sequence is Zinc import ATP-binding protein ZnuC 2 (243 aa).

In terms of domain architecture, ABC transporter spans 3-218 (LSLHQLSVKF…PEYKVLFGLD (216 aa)). ATP is bound at residue 35–42 (GPNGSGKS).

Belongs to the ABC transporter superfamily. Zinc importer (TC 3.A.1.15.5) family. In terms of assembly, the complex is composed of two ATP-binding proteins (ZnuC), two transmembrane proteins (ZnuB) and a solute-binding protein (ZnuA).

It localises to the cell inner membrane. It carries out the reaction Zn(2+)(out) + ATP(in) + H2O(in) = Zn(2+)(in) + ADP(in) + phosphate(in) + H(+)(in). Its function is as follows. Part of the ABC transporter complex ZnuABC involved in zinc import. Responsible for energy coupling to the transport system. This chain is Zinc import ATP-binding protein ZnuC 2, found in Aliivibrio fischeri (strain ATCC 700601 / ES114) (Vibrio fischeri).